We begin with the raw amino-acid sequence, 888 residues long: Tyrosine-protein kinase receptor UFO (888 aa).

Positions 1–18 are cleaved as a signal peptide; that stretch reads MGRVPLAWWLALCCWGCA. The segment at 19–86 is interaction with GAS6; it reads AHKDTQTEAG…QTQVPLGEDW (68 aa). Residues 19 to 445 lie on the Extracellular side of the membrane; the sequence is AHKDTQTEAG…PPRAFSWPWW (427 aa). 2 consecutive Ig-like C2-type domains span residues 30-122 and 133-216; these read PFVG…TFVS and PYFL…ATIT. The N-linked (GlcNAc...) asparagine glycan is linked to asparagine 37. Cysteines 50 and 111 form a disulfide. N-linked (GlcNAc...) asparagine glycans are attached at residues asparagine 151 and asparagine 192. Cysteines 154 and 199 form a disulfide. 2 Fibronectin type-III domains span residues 221–325 and 330–422; these read RPHH…TTEG and PPEN…PWRP. Residues asparagine 333, asparagine 339, and asparagine 395 are each glycosylated (N-linked (GlcNAc...) asparagine). Residues 446 to 466 traverse the membrane as a helical segment; that stretch reads YVLLGALVAAACVLILALFLV. At 467-888 the chain is on the cytoplasmic side; that stretch reads HRRKKETRYG…PAPPGQEDGA (422 aa). Residues 530–801 form the Protein kinase domain; the sequence is VALGKTLGEG…ELREDLENTL (272 aa). ATP-binding positions include 536-544 and lysine 561; that span reads LGEGEFGAV. Aspartate 666 acts as the Proton acceptor in catalysis. A phosphotyrosine; by autocatalysis mark is found at tyrosine 697, tyrosine 773, and tyrosine 815. Positions 820 to 846 are disordered; that stretch reads EGGSHLEPRGAAGGADPPTQPDPKDSC. Tyrosine 860 is modified (phosphotyrosine; by autocatalysis). Residues 865–888 form a disordered region; sequence STAPGPTLSADRGCPAPPGQEDGA.

Belongs to the protein kinase superfamily. Tyr protein kinase family. AXL/UFO subfamily. Heterodimer and heterotetramer with ligand GAS6. Interacts with CBL, GRB2, LCK, NCK2, PIK3R1, PIK3R2, PIK3R3, PLCG1, SOCS1 and TNS2. Part of a complex including AXL, TNK2 and GRB2, in which GRB2 promotes AXL recruitment by TNK2. In terms of processing, monoubiquitinated upon GAS6-binding. A very small proportion of the receptor could be subjected to polyubiquitination in a very transient fashion. Post-translationally, phosphorylated at tyrosine residues by autocatalysis, which activates kinase activity. As to expression, in distinct substructures of a broad spectrum of developing tissues (in the late embryogenesis). In cells forming organ capsules as well as in connective tissue structures (in adult).

It localises to the cell membrane. It catalyses the reaction L-tyrosyl-[protein] + ATP = O-phospho-L-tyrosyl-[protein] + ADP + H(+). Activated by GAS6-binding and subsequent autophosphorylation. In terms of biological role, receptor tyrosine kinase that transduces signals from the extracellular matrix into the cytoplasm by binding growth factor GAS6 and which is thus regulating many physiological processes including cell survival, cell proliferation, migration and differentiation. Ligand binding at the cell surface induces dimerization and autophosphorylation of AXL. Following activation by ligand, AXL binds and induces tyrosine phosphorylation of PI3-kinase subunits PIK3R1, PIK3R2 and PIK3R3; but also GRB2, PLCG1, LCK and PTPN11. Other downstream substrate candidates for AXL are CBL, NCK2, SOCS1 and TNS2. Recruitment of GRB2 and phosphatidylinositol 3 kinase regulatory subunits by AXL leads to the downstream activation of the AKT kinase. GAS6/AXL signaling plays a role in various processes such as endothelial cell survival during acidification by preventing apoptosis, optimal cytokine signaling during human natural killer cell development, hepatic regeneration, gonadotropin-releasing hormone neuron survival and migration, platelet activation, or regulation of thrombotic responses. Also plays an important role in inhibition of Toll-like receptors (TLRs)-mediated innate immune response. This chain is Tyrosine-protein kinase receptor UFO (Axl), found in Mus musculus (Mouse).